Here is a 447-residue protein sequence, read N- to C-terminus: MSQSKADYINVIGAGLAGSEAAYQIAKRGIPVKLYEMRGVKATPQHKTTNFAELVCSNSFRGDSLTNAVGLLKEEMRRLDSIIMRNGEAHRVPAGGAMAVDREGYAEAVTAEIESHPLIEVIREEITEIPDDAITVIASGPLTSDALAEKIHELNGGDGFYFYDAAAPIVDKATIDMNKVYLKSRYDKGEAAYLNCPMTKEEFMAFYEALTTAEEAPLNSFEKEKYFEGCMPIEVMAKRGIKTMLYGPMKPVGLEYPEDYMGPRDGDFKTPYAVVQLRQDNAAGSLYNIVGFQTHLKWGEQKRVFQMIPGLENAEFVRYGVMHRNSYMDSPNLLKQTFQSKSNPNLFFAGQMTGVEGYVESAASGLVAGINAARLFKGEDEVIFPHTTAIGSLPYYVTHAESKHFQPMNVNFGIIKELEGPRIRDKKERYEKIAERALKDLQTFIDA.

13–18 (GAGLAG) serves as a coordination point for FAD.

The protein belongs to the MnmG family. TrmFO subfamily. Requires FAD as cofactor.

The protein resides in the cytoplasm. It carries out the reaction uridine(54) in tRNA + (6R)-5,10-methylene-5,6,7,8-tetrahydrofolate + NADH + H(+) = 5-methyluridine(54) in tRNA + (6S)-5,6,7,8-tetrahydrofolate + NAD(+). It catalyses the reaction uridine(54) in tRNA + (6R)-5,10-methylene-5,6,7,8-tetrahydrofolate + NADPH + H(+) = 5-methyluridine(54) in tRNA + (6S)-5,6,7,8-tetrahydrofolate + NADP(+). Catalyzes the folate-dependent formation of 5-methyl-uridine at position 54 (M-5-U54) in all tRNAs. In Streptococcus thermophilus (strain CNRZ 1066), this protein is Methylenetetrahydrofolate--tRNA-(uracil-5-)-methyltransferase TrmFO.